The primary structure comprises 111 residues: Antitoxin PrlF (111 aa).

The SpoVT-AbrB domain maps to 12 to 59 (TTESKVTIRGQTTIPAPVREALKLKPGQDSIHYEILPGGQVFMCRLGD).

As to quaternary structure, homodimer; forms a complex with YhaV with stoichiometry PrlF(2)-YhaV(4), possibly as a YhaV(2)-PrlF(2)-YhaV(2) complex like the MazFE complex. This complex is seen to dimerize in solution.

The protein resides in the cytoplasm. Functionally, antitoxin component of a type II toxin-antitoxin (TA) system. Labile antitoxin that binds to the YhaV toxin and neutralizes its ribonuclease activity. Also acts as a transcription factor. The YhaV/PrlF complex binds the prlF-yhaV operon, probably negatively regulating its expression. Negatively regulates its own expression as well as relieving the export block imposed by high-level synthesis of the LamB-LacZ hybrid protein. Overexpression leads to increased doubling time and also suppresses a htrA (degP) null phenotype. This Escherichia coli (strain K12) protein is Antitoxin PrlF (prlF).